A 180-amino-acid chain; its full sequence is UPF0134 protein MPN_368 (180 aa).

It belongs to the UPF0134 family.

The sequence is that of UPF0134 protein MPN_368 from Mycoplasma pneumoniae (strain ATCC 29342 / M129 / Subtype 1) (Mycoplasmoides pneumoniae).